Reading from the N-terminus, the 800-residue chain is MQHTMSFRIFLRRYATKHDLSKVRNIGIIAHIDAGKTTTTERMLYYSGKINRIGDVDQGDTITDYLPQERSRGITIQSAAISFNWKKDYKINLIDTPGHADFTFEVIRSLKVLDSCVTILDSVAGVEAQTEKVWKQSSGLPKICFLNKMDRVGAGFSRTVKELVVKMNTRALLINTPIFQVDPVTNESKFSGVLDLIYGKQLIWDTNDPDKINVTDVDENHDCYEYLVRGREALVETLGETDESIVEHFFNDADGEYLNVSPEVLNASIRKATISLSATPVLCGASFRNIGVQPLLDAIANYLPSPSEARPPELNHKNVPITQNPLTGLVLNKNPNLCVALAFKVITDAIRGTMIFIRVYSGVLRSNHTVYNTTTGTKFKIGKLVRMHANVPEEVNELYPGDIGVLTGSNVSEHIRTGDTIVTHVTKKDGLRSFDKNVELTLKINPIEIPPPVFNAAIEPKTLGNKKPMEQALSQLTREDPSLVVTHDEETGQTLLSGMGELHLDIARDRLLNELNAQVDVERVIVSYKETLNHSTQEKTLETDDGYKITAVIEPLDEEMKAKAKKDEEWFSLANDNNFMIMEKHTKYDPDKNWPFQVPYVAVVNALLPSSLVALQRGGKIGGFPLSSCVIRIKNDWDLPIDAPSISPLLTLSRQLFTQILLGEDQSNYSVLEPVMNVDVTVQQQDMGPVIQDLSSARKANILSIEDENTNTVSESNIRFQHIADKMWLPEDPTLEFAKLGKEGQAPKMVKAQAPLKEMVAYNNKIRSITQGRGSFNMYYHGMQPVTHDRLQSVLADYHQ.

The 287-residue stretch at 21 to 307 (SKVRNIGIIA…AIANYLPSPS (287 aa)) folds into the tr-type G domain. GTP contacts are provided by residues 30 to 37 (AHIDAGKT), 95 to 99 (DTPGH), and 147 to 150 (NKMD).

The protein belongs to the TRAFAC class translation factor GTPase superfamily. Classic translation factor GTPase family. EF-G/EF-2 subfamily.

It is found in the mitochondrion. In terms of biological role, mitochondrial GTPase that mediates the disassembly of ribosomes from messenger RNA at the termination of mitochondrial protein biosynthesis. Not involved in the GTP-dependent ribosomal translocation step during translation elongation. This is Ribosome-releasing factor 2, mitochondrial from Kluyveromyces lactis (strain ATCC 8585 / CBS 2359 / DSM 70799 / NBRC 1267 / NRRL Y-1140 / WM37) (Yeast).